The sequence spans 182 residues: Ribosome maturation factor RimM (182 aa).

One can recognise a PRC barrel domain in the interval 102-182; sequence EEGDYYWKDL…SIEVDWDPGF (81 aa).

This sequence belongs to the RimM family. In terms of assembly, binds ribosomal protein uS19.

It localises to the cytoplasm. An accessory protein needed during the final step in the assembly of 30S ribosomal subunit, possibly for assembly of the head region. Essential for efficient processing of 16S rRNA. May be needed both before and after RbfA during the maturation of 16S rRNA. It has affinity for free ribosomal 30S subunits but not for 70S ribosomes. This chain is Ribosome maturation factor RimM, found in Escherichia fergusonii (strain ATCC 35469 / DSM 13698 / CCUG 18766 / IAM 14443 / JCM 21226 / LMG 7866 / NBRC 102419 / NCTC 12128 / CDC 0568-73).